Reading from the N-terminus, the 398-residue chain is Histidinol-phosphate aminotransferase (398 aa).

The segment covering 1–10 (MTGQRATPQP) has biased composition (polar residues). A disordered region spans residues 1-30 (MTGQRATPQPTLDDLPLRDDLRGKSPYGAP). At K234 the chain carries N6-(pyridoxal phosphate)lysine.

The protein belongs to the class-II pyridoxal-phosphate-dependent aminotransferase family. Histidinol-phosphate aminotransferase subfamily. In terms of assembly, homodimer. Pyridoxal 5'-phosphate serves as cofactor.

It catalyses the reaction L-histidinol phosphate + 2-oxoglutarate = 3-(imidazol-4-yl)-2-oxopropyl phosphate + L-glutamate. It participates in amino-acid biosynthesis; L-histidine biosynthesis; L-histidine from 5-phospho-alpha-D-ribose 1-diphosphate: step 7/9. The chain is Histidinol-phosphate aminotransferase from Mycobacterium avium (strain 104).